The primary structure comprises 906 residues: ATP-dependent DNA helicase DDX11 (906 aa).

Residues 9–442 (GGIHFPFPFP…KNLMYIKQIL (434 aa)) form the Helicase ATP-binding domain. An ATP-binding site is contributed by 44–51 (SPTGTGKS). A disordered region spans residues 78 to 111 (APGSGPPSSEKNSLLTSSSCQEPTDTPRPAGEPD). A compositionally biased stretch (low complexity) spans 85-96 (SSEKNSLLTSSS). Ser260 is subject to Phosphoserine. [4Fe-4S] cluster contacts are provided by Cys265 and Cys283. Residues 284–301 (VDMQRSKREKNGTGEDKP) are compositionally biased toward basic and acidic residues. The interval 284–310 (VDMQRSKREKNGTGEDKPKRKRQKIQT) is disordered. Positions 312 and 347 each coordinate [4Fe-4S] cluster. The DEAH box motif lies at 390 to 393 (DEAH).

This sequence belongs to the DEAD box helicase family. DEAH subfamily. DDX11/CHL1 sub-subfamily. Associates with the CTF18-RFC complex. Associates with a cohesin complex composed of RAD21, SMC1 proteins and SMC3. Interacts with CHTF18. Interacts with DSCC1. Interacts with FEN1; this interaction is direct and increases flap endonuclease activity of FEN1. Interacts with PCNA. Interacts with POLR1A and UBTF. Interacts with RAD21, SMC1 proteins and SMC3. Interacts with RFC2. Interacts with TIMELESS; this interaction increases recruitment of both proteins onto chromatin in response to replication stress induction by hydroxyurea. It depends on [4Fe-4S] cluster as a cofactor.

It localises to the nucleus. Its subcellular location is the nucleolus. The protein localises to the cytoplasm. The protein resides in the cytoskeleton. It is found in the spindle pole. It localises to the midbody. Its subcellular location is the microtubule organizing center. The protein localises to the centrosome. The enzyme catalyses Couples ATP hydrolysis with the unwinding of duplex DNA at the replication fork by translocating in the 5'-3' direction. This creates two antiparallel DNA single strands (ssDNA). The leading ssDNA polymer is the template for DNA polymerase III holoenzyme which synthesizes a continuous strand.. It catalyses the reaction ATP + H2O = ADP + phosphate + H(+). In terms of biological role, DNA-dependent ATPase and ATP-dependent DNA helicase that participates in various functions in genomic stability, including DNA replication, DNA repair and heterochromatin organization as well as in ribosomal RNA synthesis. Its double-stranded DNA helicase activity requires either a minimal 5'-single-stranded tail length of approximately 15 nt (flap substrates) or 10 nt length single-stranded gapped DNA substrates of a partial duplex DNA structure for helicase loading and translocation along DNA in a 5' to 3' direction. The helicase activity is capable of displacing duplex regions up to 100 bp, which can be extended up to 500 bp by the replication protein A (RPA) or the cohesion CTF18-replication factor C (Ctf18-RFC) complex activities. Also shows ATPase- and helicase activities on substrates that mimic key DNA intermediates of replication, repair and homologous recombination reactions, including forked duplex, anti-parallel G-quadruplex and three-stranded D-loop DNA molecules. Plays a role in DNA double-strand break (DSB) repair at the DNA replication fork during DNA replication recovery from DNA damage. Recruited with TIMELESS factor upon DNA-replication stress response at DNA replication fork to preserve replication fork progression, and hence ensure DNA replication fidelity. Also cooperates with TIMELESS factor during DNA replication to regulate proper sister chromatid cohesion and mitotic chromosome segregation. Stimulates 5'-single-stranded DNA flap endonuclease activity of FEN1 in an ATP- and helicase-independent manner; and hence it may contribute in Okazaki fragment processing at DNA replication fork during lagging strand DNA synthesis. Its ability to function at DNA replication fork is modulated by its binding to long non-coding RNA (lncRNA) cohesion regulator non-coding RNA DDX11-AS1/CONCR, which is able to increase both DDX11 ATPase activity and binding to DNA replicating regions. Also plays a role in heterochromatin organization. Involved in rRNA transcription activation through binding to active hypomethylated rDNA gene loci by recruiting UBTF and the RNA polymerase Pol I transcriptional machinery. Plays a role in embryonic development and prevention of aneuploidy. Involved in melanoma cell proliferation and survival. Associates with chromatin at DNA replication fork regions. Binds to single- and double-stranded DNAs. This is ATP-dependent DNA helicase DDX11 from Mus musculus (Mouse).